The following is a 124-amino-acid chain: Large ribosomal subunit protein uL18 (124 aa).

This sequence belongs to the universal ribosomal protein uL18 family. Part of the 50S ribosomal subunit; part of the 5S rRNA/L5/L18/L25 subcomplex. Contacts the 5S and 23S rRNAs.

In terms of biological role, this is one of the proteins that bind and probably mediate the attachment of the 5S RNA into the large ribosomal subunit, where it forms part of the central protuberance. The sequence is that of Large ribosomal subunit protein uL18 from Frankia casuarinae (strain DSM 45818 / CECT 9043 / HFP020203 / CcI3).